Here is a 209-residue protein sequence, read N- to C-terminus: Uracil phosphoribosyltransferase (209 aa).

Residues R79, R104, and 131–139 (DPMLATGGS) contribute to the 5-phospho-alpha-D-ribose 1-diphosphate site. Residues I194 and 199–201 (GDA) contribute to the uracil site. D200 serves as a coordination point for 5-phospho-alpha-D-ribose 1-diphosphate.

Belongs to the UPRTase family. Mg(2+) serves as cofactor.

It catalyses the reaction UMP + diphosphate = 5-phospho-alpha-D-ribose 1-diphosphate + uracil. It functions in the pathway pyrimidine metabolism; UMP biosynthesis via salvage pathway; UMP from uracil: step 1/1. With respect to regulation, allosterically activated by GTP. Functionally, catalyzes the conversion of uracil and 5-phospho-alpha-D-ribose 1-diphosphate (PRPP) to UMP and diphosphate. The chain is Uracil phosphoribosyltransferase from Halalkalibacterium halodurans (strain ATCC BAA-125 / DSM 18197 / FERM 7344 / JCM 9153 / C-125) (Bacillus halodurans).